A 488-amino-acid chain; its full sequence is Probable cytochrome P450 6u1 (488 aa).

Heme is bound at residue Cys430.

This sequence belongs to the cytochrome P450 family. Heme is required as a cofactor.

It is found in the endoplasmic reticulum membrane. It localises to the microsome membrane. May be involved in the metabolism of insect hormones and in the breakdown of synthetic insecticides. This is Probable cytochrome P450 6u1 (Cyp6u1) from Drosophila melanogaster (Fruit fly).